We begin with the raw amino-acid sequence, 139 residues long: Small ribosomal subunit protein bS16 (139 aa).

The segment at 84–139 (KGEPAPAPLLQPAEKAARPSFEAIGGEDEGKGEAITQKKKADKRDEAAAESSASEA) is disordered.

It belongs to the bacterial ribosomal protein bS16 family.

The protein is Small ribosomal subunit protein bS16 of Streptomyces lividans.